We begin with the raw amino-acid sequence, 456 residues long: Phosphomethylpyrimidine synthase (456 aa).

Substrate-binding positions include Asn-80, Met-109, Tyr-139, His-175, 195–197 (SRG), 236–239 (DSLR), and Glu-275. His-279 contributes to the Zn(2+) binding site. A substrate-binding site is contributed by Tyr-302. His-343 contributes to the Zn(2+) binding site. Residues Cys-423, Cys-426, and Cys-431 each contribute to the [4Fe-4S] cluster site.

This sequence belongs to the ThiC family. [4Fe-4S] cluster serves as cofactor.

The enzyme catalyses 5-amino-1-(5-phospho-beta-D-ribosyl)imidazole + S-adenosyl-L-methionine = 4-amino-2-methyl-5-(phosphooxymethyl)pyrimidine + CO + 5'-deoxyadenosine + formate + L-methionine + 3 H(+). It participates in cofactor biosynthesis; thiamine diphosphate biosynthesis. Its function is as follows. Catalyzes the synthesis of the hydroxymethylpyrimidine phosphate (HMP-P) moiety of thiamine from aminoimidazole ribotide (AIR) in a radical S-adenosyl-L-methionine (SAM)-dependent reaction. The sequence is that of Phosphomethylpyrimidine synthase from Synechococcus sp. (strain ATCC 27144 / PCC 6301 / SAUG 1402/1) (Anacystis nidulans).